The sequence spans 444 residues: Na(+)-translocating NADH-quinone reductase subunit A (444 aa).

This sequence belongs to the NqrA family. In terms of assembly, composed of six subunits; NqrA, NqrB, NqrC, NqrD, NqrE and NqrF.

It carries out the reaction a ubiquinone + n Na(+)(in) + NADH + H(+) = a ubiquinol + n Na(+)(out) + NAD(+). NQR complex catalyzes the reduction of ubiquinone-1 to ubiquinol by two successive reactions, coupled with the transport of Na(+) ions from the cytoplasm to the periplasm. NqrA to NqrE are probably involved in the second step, the conversion of ubisemiquinone to ubiquinol. The chain is Na(+)-translocating NADH-quinone reductase subunit A from Shewanella frigidimarina (strain NCIMB 400).